A 1011-amino-acid chain; its full sequence is Liprin-beta-1 (1011 aa).

Serine 37 is modified (phosphoserine). Threonine 39 is subject to Phosphothreonine. Serine 40 bears the Phosphoserine mark. Residues 156–405 (QQELLSRTSL…VPEEFHTTIL (250 aa)) adopt a coiled-coil conformation. Lysine 322 is modified (N6-acetyllysine). 2 disordered regions span residues 420 to 439 (ETSEKSKLTPKPETSFEEND) and 463 to 634 (KSSS…RDLG). 2 positions are modified to phosphoserine: serine 434 and serine 466. Basic and acidic residues predominate over residues 470–492 (LKKETSDGEKETIQKTSEDRAPA). Lysine 471 is covalently cross-linked (Glycyl lysine isopeptide (Lys-Gly) (interchain with G-Cter in SUMO2)). Residues serine 523 and serine 540 each carry the phosphoserine modification. A compositionally biased stretch (basic and acidic residues) spans 546–556 (ETEKETAEHLD). Serine 579 carries the phosphoserine modification. Over residues 584–598 (KKSRGIMKLFGKLRR) the composition is skewed to basic residues. Phosphoserine is present on residues serine 601 and serine 636. 2 consecutive SAM domains span residues 647 to 711 (WTKE…LGSE) and 719 to 782 (LDFN…LRIN). Position 794 is a phosphoserine (serine 794). One can recognise an SAM 3 domain in the interval 804–876 (VQKWTNHRVM…ATHFNLLIGA (73 aa)). A phosphoserine mark is found at serine 999, serine 1001, and serine 1003. Threonine 1005 carries the post-translational modification Phosphothreonine.

Belongs to the liprin family. Liprin-beta subfamily. As to quaternary structure, forms homodimers and heterodimers. Interacts with S100A4 in a Ca(2+)-dependent mode. Part of a cortical microtubule stabilization complex (CMSC) composed of KANK1, PPFIA1, PPFIBP1, ERC1/ELKS, PHLDB2/LL5beta, CLASPs, KIF21A and possibly additional interactors; within CMSCs KANK1 and PHLDB2/LL5beta seem to be the core components for recruiting microtubule-binding proteins KIF21A and CLASPs, whereas PPFIA1, PPFIBP1 and ERC1/ELKS serve as scaffolds for protein clustering. Interacts with KANK1 (via CC1 domain, residues 244-339). As to expression, widely expressed. Absent in liver.

It is found in the cytoplasm. The protein resides in the cell cortex. May regulate the disassembly of focal adhesions. Did not bind receptor-like tyrosine phosphatases type 2A. The protein is Liprin-beta-1 (PPFIBP1) of Homo sapiens (Human).